Here is a 179-residue protein sequence, read N- to C-terminus: Large ribosomal subunit protein uL5 (179 aa).

The protein belongs to the universal ribosomal protein uL5 family. In terms of assembly, part of the 50S ribosomal subunit; part of the 5S rRNA/L5/L18/L25 subcomplex. Contacts the 5S rRNA and the P site tRNA. Forms a bridge to the 30S subunit in the 70S ribosome.

Its function is as follows. This is one of the proteins that bind and probably mediate the attachment of the 5S RNA into the large ribosomal subunit, where it forms part of the central protuberance. In the 70S ribosome it contacts protein S13 of the 30S subunit (bridge B1b), connecting the 2 subunits; this bridge is implicated in subunit movement. Contacts the P site tRNA; the 5S rRNA and some of its associated proteins might help stabilize positioning of ribosome-bound tRNAs. In Shewanella oneidensis (strain ATCC 700550 / JCM 31522 / CIP 106686 / LMG 19005 / NCIMB 14063 / MR-1), this protein is Large ribosomal subunit protein uL5.